Here is a 243-residue protein sequence, read N- to C-terminus: Probable transcriptional regulatory protein Smlt3713 (243 aa).

The protein belongs to the TACO1 family.

It localises to the cytoplasm. In Stenotrophomonas maltophilia (strain K279a), this protein is Probable transcriptional regulatory protein Smlt3713.